The chain runs to 38 residues: Very early lactation protein (38 aa).

Homodimer. Post-translationally, O-glycosylated. Contains sialic acid residues. In terms of tissue distribution, found in the whey fraction of milk (at protein level).

It is found in the secreted. The chain is Very early lactation protein from Trichosurus vulpecula (Brush-tailed possum).